The primary structure comprises 1406 residues: DNA-directed RNA polymerase subunit beta' (1406 aa).

Residues cysteine 72, cysteine 74, cysteine 87, and cysteine 90 each coordinate Zn(2+). Positions 462, 464, and 466 each coordinate Mg(2+). Cysteine 816, cysteine 889, cysteine 896, and cysteine 899 together coordinate Zn(2+).

Belongs to the RNA polymerase beta' chain family. The RNAP catalytic core consists of 2 alpha, 1 beta, 1 beta' and 1 omega subunit. When a sigma factor is associated with the core the holoenzyme is formed, which can initiate transcription. Requires Mg(2+) as cofactor. It depends on Zn(2+) as a cofactor.

It carries out the reaction RNA(n) + a ribonucleoside 5'-triphosphate = RNA(n+1) + diphosphate. Its function is as follows. DNA-dependent RNA polymerase catalyzes the transcription of DNA into RNA using the four ribonucleoside triphosphates as substrates. The polypeptide is DNA-directed RNA polymerase subunit beta' (Psychrobacter sp. (strain PRwf-1)).